Consider the following 356-residue polypeptide: Putative ankyrin repeat protein R599 (356 aa).

ANK repeat units lie at residues 111 to 143, 152 to 182, 183 to 213, 215 to 238, 239 to 266, and 267 to 298; these read NDDI…FCDN, RLEK…NVNT, HNYE…KLSD, KRKI…ELEV, NFDD…GANI, and NSIP…DINN.

The sequence is that of Putative ankyrin repeat protein R599 from Acanthamoeba polyphaga (Amoeba).